The following is a 606-amino-acid chain: Anthranilate synthase alpha subunit 2, chloroplastic (606 aa).

Residues 1 to 49 constitute a chloroplast transit peptide; it reads MESIAAATFTPSRLAARPATPAAAAAPVRARAAVAAGGRRRTSRRGGVR.

This sequence belongs to the anthranilate synthase component I family. As to quaternary structure, heterotetramer consisting of two non-identical subunits: a beta subunit and a large alpha subunit.

It localises to the plastid. It is found in the chloroplast. It catalyses the reaction chorismate + L-glutamine = anthranilate + pyruvate + L-glutamate + H(+). Its pathway is amino-acid biosynthesis; L-tryptophan biosynthesis; L-tryptophan from chorismate: step 1/5. Its activity is regulated as follows. Feedback inhibition by tryptophan. In terms of biological role, part of a heterotetrameric complex that catalyzes the two-step biosynthesis of anthranilate, an intermediate in the biosynthesis of L-tryptophan. In the first step, the glutamine-binding beta subunit of anthranilate synthase (AS) provides the glutamine amidotransferase activity which generates ammonia as a substrate that, along with chorismate, is used in the second step, catalyzed by the large alpha subunit of AS to produce anthranilate. The sequence is that of Anthranilate synthase alpha subunit 2, chloroplastic from Oryza sativa subsp. japonica (Rice).